Consider the following 261-residue polypeptide: Ribosomal RNA small subunit methyltransferase J (261 aa).

Residues 109–110, 125–126, and Asp179 contribute to the S-adenosyl-L-methionine site; these read RD and ER.

This sequence belongs to the methyltransferase superfamily. RsmJ family.

It is found in the cytoplasm. The enzyme catalyses guanosine(1516) in 16S rRNA + S-adenosyl-L-methionine = N(2)-methylguanosine(1516) in 16S rRNA + S-adenosyl-L-homocysteine + H(+). In terms of biological role, specifically methylates the guanosine in position 1516 of 16S rRNA. The polypeptide is Ribosomal RNA small subunit methyltransferase J (Pseudomonas aeruginosa (strain UCBPP-PA14)).